Consider the following 362-residue polypeptide: UDP-N-acetylglucosamine--N-acetylmuramyl-(pentapeptide) pyrophosphoryl-undecaprenol N-acetylglucosamine transferase (362 aa).

Residues 21–23 (TGG), Asn129, Arg170, Ser198, and Gln290 contribute to the UDP-N-acetyl-alpha-D-glucosamine site.

This sequence belongs to the glycosyltransferase 28 family. MurG subfamily.

It is found in the cell inner membrane. The enzyme catalyses di-trans,octa-cis-undecaprenyl diphospho-N-acetyl-alpha-D-muramoyl-L-alanyl-D-glutamyl-meso-2,6-diaminopimeloyl-D-alanyl-D-alanine + UDP-N-acetyl-alpha-D-glucosamine = di-trans,octa-cis-undecaprenyl diphospho-[N-acetyl-alpha-D-glucosaminyl-(1-&gt;4)]-N-acetyl-alpha-D-muramoyl-L-alanyl-D-glutamyl-meso-2,6-diaminopimeloyl-D-alanyl-D-alanine + UDP + H(+). It participates in cell wall biogenesis; peptidoglycan biosynthesis. Cell wall formation. Catalyzes the transfer of a GlcNAc subunit on undecaprenyl-pyrophosphoryl-MurNAc-pentapeptide (lipid intermediate I) to form undecaprenyl-pyrophosphoryl-MurNAc-(pentapeptide)GlcNAc (lipid intermediate II). The chain is UDP-N-acetylglucosamine--N-acetylmuramyl-(pentapeptide) pyrophosphoryl-undecaprenol N-acetylglucosamine transferase from Synechococcus sp. (strain JA-3-3Ab) (Cyanobacteria bacterium Yellowstone A-Prime).